The sequence spans 552 residues: Carboxypeptidase Y homolog A (552 aa).

The first 18 residues, 1-18 (MRIATSTLLVGAASAAFA), serve as a signal peptide directing secretion. Residues 19–133 (PQDGTQRVLN…KLDNYNLRAR (115 aa)) constitute a propeptide that is removed on maturation. 5 cysteine pairs are disulfide-bonded: C187–C427, C321–C335, C345–C368, C352–C361, and C390–C397. Residue N218 is glycosylated (N-linked (GlcNAc...) asparagine). S274 is an active-site residue. The active site involves D466. N516 carries N-linked (GlcNAc...) asparagine glycosylation. H527 is a catalytic residue.

Belongs to the peptidase S10 family.

Its subcellular location is the vacuole. It carries out the reaction Release of a C-terminal amino acid with broad specificity.. In terms of biological role, vacuolar carboxypeptidase involved in degradation of small peptides. Digests preferentially peptides containing an aliphatic or hydrophobic residue in P1' position, as well as methionine, leucine or phenylalanine in P1 position of ester substrate. This is Carboxypeptidase Y homolog A (CPYA) from Pyricularia oryzae (strain 70-15 / ATCC MYA-4617 / FGSC 8958) (Rice blast fungus).